We begin with the raw amino-acid sequence, 671 residues long: DNA ligase (671 aa).

NAD(+) contacts are provided by residues 32–36 (DAEYD), 81–82 (SL), and glutamate 113. The active-site N6-AMP-lysine intermediate is lysine 115. NAD(+) is bound by residues arginine 136, glutamate 173, lysine 290, and lysine 314. Zn(2+) is bound by residues cysteine 408, cysteine 411, cysteine 426, and cysteine 432. In terms of domain architecture, BRCT spans 593 to 671 (EIDSPFAGKT…EAEMIRLLGA (79 aa)).

This sequence belongs to the NAD-dependent DNA ligase family. LigA subfamily. It depends on Mg(2+) as a cofactor. Mn(2+) serves as cofactor.

The enzyme catalyses NAD(+) + (deoxyribonucleotide)n-3'-hydroxyl + 5'-phospho-(deoxyribonucleotide)m = (deoxyribonucleotide)n+m + AMP + beta-nicotinamide D-nucleotide.. In terms of biological role, DNA ligase that catalyzes the formation of phosphodiester linkages between 5'-phosphoryl and 3'-hydroxyl groups in double-stranded DNA using NAD as a coenzyme and as the energy source for the reaction. It is essential for DNA replication and repair of damaged DNA. The polypeptide is DNA ligase (Salmonella paratyphi A (strain ATCC 9150 / SARB42)).